A 340-amino-acid polypeptide reads, in one-letter code: Ketol-acid reductoisomerase (NADP(+)) (340 aa).

Residues 2–181 (AKVFYNGDIN…GSARAGVIET (180 aa)) form the KARI N-terminal Rossmann domain. NADP(+) is bound by residues 25–28 (YGSQ), Arg48, Ser52, and 82–85 (DEHQ). Residue His107 is part of the active site. Residue Gly133 coordinates NADP(+). The 146-residue stretch at 182-327 (TFQEETETDL…RELREMMPFV (146 aa)) folds into the KARI C-terminal knotted domain. Asp190, Glu194, Glu226, and Glu230 together coordinate Mg(2+). Ser251 provides a ligand contact to substrate.

It belongs to the ketol-acid reductoisomerase family. Mg(2+) serves as cofactor.

The enzyme catalyses (2R)-2,3-dihydroxy-3-methylbutanoate + NADP(+) = (2S)-2-acetolactate + NADPH + H(+). It carries out the reaction (2R,3R)-2,3-dihydroxy-3-methylpentanoate + NADP(+) = (S)-2-ethyl-2-hydroxy-3-oxobutanoate + NADPH + H(+). The protein operates within amino-acid biosynthesis; L-isoleucine biosynthesis; L-isoleucine from 2-oxobutanoate: step 2/4. It functions in the pathway amino-acid biosynthesis; L-valine biosynthesis; L-valine from pyruvate: step 2/4. Involved in the biosynthesis of branched-chain amino acids (BCAA). Catalyzes an alkyl-migration followed by a ketol-acid reduction of (S)-2-acetolactate (S2AL) to yield (R)-2,3-dihydroxy-isovalerate. In the isomerase reaction, S2AL is rearranged via a Mg-dependent methyl migration to produce 3-hydroxy-3-methyl-2-ketobutyrate (HMKB). In the reductase reaction, this 2-ketoacid undergoes a metal-dependent reduction by NADPH to yield (R)-2,3-dihydroxy-isovalerate. In Halalkalibacterium halodurans (strain ATCC BAA-125 / DSM 18197 / FERM 7344 / JCM 9153 / C-125) (Bacillus halodurans), this protein is Ketol-acid reductoisomerase (NADP(+)).